We begin with the raw amino-acid sequence, 874 residues long: MSERGDDDRTTSTINSLAKRRYQDNLDTFQEERAGFQQKRPHAVDDEDEDFETAAPPTKQKTKAEEMMERMGYKAGEGLGKNKQGIQEPVALSTQRGKTGLGHEGAKAVARDMNEQWDDSTENKTVEETVIWMTDIDEGIRREICDKLIKDDQWMVVRKEKKVIDDETEFCSEKELKDMIEAKNVFDSMSDKDLREARTRANPYETIGSAFFQNRAAMKTANMDKIYDWILSRENTGNNSFLLKNPLQEGTTAENVDRHEDLFYFADVCAGPGGFSEYMLWRKAFYNAKGFGFTLAGKDDFKLQKFTASSAYFFETFYGTKKNGDVMDPENIDSLEKFISEGTDGQGVHLMMADGGFSVEGQENIQEILSKRLYLCQLLVSLCIVREGGNFFCKLFDIFTPFSVGLIYLMRVCYDSISLHKPHTSRPANSERYITCKGLRKEFAGVVKDYLKRVNRKLDELKNKNSKDDVMELMPLDVIKSDEQFMKEIIEHNEVLAHRQTVYLQKYKSFAKNQGQFDKDQGNLRDECLKYWQVPNKQRPRGGDRGSRNGNQERLNPNVVLGKYTSKICGEAELGISFRGLGAASDPQLLIGTGDAVFIYRHGHFEQIDRDYARIPENTILLVDCAEEVKTDGSKIRISSDPHMIRIADAAVLYGDNVSQLPYEARMKAAQKFALALKLTKKTIQIGWGFRAKDITPHQVCCAQTYSLKELDEFQSNLIELKQRGEVIVLFKEGDRQFKTQSLRLTRIIKQDWQMGWSKSQQVPYVHSPLHQKEGSILEDQWKKREIHSSFWDSVILTNKDKQKMTEMMQHGHNAVPSTIWSWKPCMRTEYGPYKIMNHPEAFDGKPTISAIKSQIAETDLSTLRSKYTPLTAL.

Residues 1–10 show a composition bias toward basic and acidic residues; sequence MSERGDDDRT. A disordered region spans residues 1-64; that stretch reads MSERGDDDRT…APPTKQKTKA (64 aa). The 47-residue stretch at 60–106 folds into the G-patch domain; the sequence is QKTKAEEMMERMGYKAGEGLGKNKQGIQEPVALSTQRGKTGLGHEGA. One can recognise a RrmJ-type SAM-dependent 2'-O-MTase domain in the interval 211-440; the sequence is FFQNRAAMKT…ERYITCKGLR (230 aa). The S-adenosyl-L-methionine site is built by G273 and D354. K394 (proton acceptor) is an active-site residue. Positions 535-555 are disordered; that stretch reads PNKQRPRGGDRGSRNGNQERL.

The catalysed reaction is a 5'-end (N(7)-methyl 5'-triphosphoguanosine)-ribonucleoside in mRNA + S-adenosyl-L-methionine = a 5'-end (N(7)-methyl 5'-triphosphoguanosine)-(2'-O-methyl-ribonucleoside) in mRNA + S-adenosyl-L-homocysteine + H(+). In terms of biological role, S-adenosyl-L-methionine-dependent methyltransferase that mediates mRNA cap1 2'-O-ribose methylation to the 5'-cap structure of mRNAs. Methylates the ribose of the first nucleotide of a m(7)GpppG-capped mRNA to produce m(7)GpppNmp (cap1). Cap1 modification is linked to higher levels of translation. In Caenorhabditis briggsae, this protein is Cap-specific mRNA (nucleoside-2'-O-)-methyltransferase 1A.